The primary structure comprises 131 residues: DNA-binding protein inhibitor ID-4 (131 aa).

The region spanning Ala-36–Leu-88 is the bHLH domain.

Heterodimer with other HLH proteins. During embryonic development, expressed in a number of neural tissues, including Rohon-Beard neurons, olfactory placode, eye primordia, and the trigeminal ganglia. Also expressed in other organs including the pronephros and liver primordium. Pronephric development begins by stage 25 and increases during tailbud stages. Expressed in both the tubules and the duct. As embryogenesis progresses, expressed in the migrating melanocytes and lateral line structures.

The protein localises to the nucleus. Functionally, transcriptional regulator (lacking a basic DNA binding domain) which negatively regulates the basic helix-loop-helix (bHLH) transcription factors by forming heterodimers and inhibiting their DNA binding and transcriptional activity. Inhibits the activity of both neurogenic (neurog1/neurogenin, neurod1/neuroD) and myogenic (myod1/myoD) bHLH factors. The polypeptide is DNA-binding protein inhibitor ID-4 (Xenopus laevis (African clawed frog)).